A 468-amino-acid chain; its full sequence is Phosphatidylglycerol--prolipoprotein diacylglyceryl transferase (468 aa).

A run of 3 helical transmembrane segments spans residues 21-41 (LPVR…LLIG), 56-76 (YDIA…YHLA), and 96-116 (IWDG…GAWI). Position 144 (Arg-144) interacts with a 1,2-diacyl-sn-glycero-3-phospho-(1'-sn-glycerol). 3 helical membrane passes run 192 to 212 (VVQP…VALI), 218 to 238 (FIIG…AGRF), and 256 to 276 (INSF…ILAP). Residues 349-468 (VVQVADRDGE…RWWRLRRRRQ (120 aa)) are disordered. Low complexity predominate over residues 391–406 (AEAASAAPEEPAALAS). The segment covering 445–455 (DGIRRQDDFSS) has biased composition (basic and acidic residues). Residues 456–468 (RRRRWWRLRRRRQ) show a composition bias toward basic residues.

Belongs to the Lgt family.

It is found in the cell membrane. The enzyme catalyses L-cysteinyl-[prolipoprotein] + a 1,2-diacyl-sn-glycero-3-phospho-(1'-sn-glycerol) = an S-1,2-diacyl-sn-glyceryl-L-cysteinyl-[prolipoprotein] + sn-glycerol 1-phosphate + H(+). It functions in the pathway protein modification; lipoprotein biosynthesis (diacylglyceryl transfer). Its function is as follows. Catalyzes the transfer of the diacylglyceryl group from phosphatidylglycerol to the sulfhydryl group of the N-terminal cysteine of a prolipoprotein, the first step in the formation of mature lipoproteins. This is Phosphatidylglycerol--prolipoprotein diacylglyceryl transferase from Mycobacterium bovis (strain ATCC BAA-935 / AF2122/97).